The chain runs to 199 residues: dITP/XTP pyrophosphatase (199 aa).

7–12 contacts substrate; that stretch reads SNNRGK. Mg(2+)-binding residues include Asp-39 and Asp-68. Residue Asp-68 is the Proton acceptor of the active site. Substrate is bound by residues Ala-69, 154–157, Lys-177, and 182–183; these read FGFD and HR.

It belongs to the HAM1 NTPase family. In terms of assembly, homodimer. Mg(2+) serves as cofactor.

It carries out the reaction XTP + H2O = XMP + diphosphate + H(+). The enzyme catalyses dITP + H2O = dIMP + diphosphate + H(+). It catalyses the reaction ITP + H2O = IMP + diphosphate + H(+). Its function is as follows. Pyrophosphatase that catalyzes the hydrolysis of nucleoside triphosphates to their monophosphate derivatives, with a high preference for the non-canonical purine nucleotides XTP (xanthosine triphosphate), dITP (deoxyinosine triphosphate) and ITP. Seems to function as a house-cleaning enzyme that removes non-canonical purine nucleotides from the nucleotide pool, thus preventing their incorporation into DNA/RNA and avoiding chromosomal lesions. This Paracidovorax citrulli (strain AAC00-1) (Acidovorax citrulli) protein is dITP/XTP pyrophosphatase.